A 362-amino-acid polypeptide reads, in one-letter code: Adenosine deaminase (362 aa).

Residues histidine 19 and histidine 21 each contribute to the Zn(2+) site. The substrate site is built by histidine 21, aspartate 23, and glycine 181. Histidine 208 serves as a coordination point for Zn(2+). Glutamate 211 functions as the Proton donor in the catalytic mechanism. Aspartate 300 is a binding site for Zn(2+).

This sequence belongs to the metallo-dependent hydrolases superfamily. Adenosine and AMP deaminases family. Adenosine deaminase subfamily. Zn(2+) is required as a cofactor.

The enzyme catalyses adenosine + H2O + H(+) = inosine + NH4(+). The catalysed reaction is 2'-deoxyadenosine + H2O + H(+) = 2'-deoxyinosine + NH4(+). Functionally, catalyzes the hydrolytic deamination of adenosine and 2-deoxyadenosine. This Mycobacterium sp. (strain MCS) protein is Adenosine deaminase.